A 386-amino-acid chain; its full sequence is 8-amino-7-oxononanoate synthase (386 aa).

Arginine 31 lines the substrate pocket. Glycine 109–tyrosine 110 provides a ligand contact to pyridoxal 5'-phosphate. Histidine 134 serves as a coordination point for substrate. Residues serine 180, aspartate 205–histidine 208, and threonine 236–lysine 239 each bind pyridoxal 5'-phosphate. N6-(pyridoxal phosphate)lysine is present on lysine 239. Substrate is bound at residue threonine 349.

Belongs to the class-II pyridoxal-phosphate-dependent aminotransferase family. BioF subfamily. As to quaternary structure, homodimer. Requires pyridoxal 5'-phosphate as cofactor.

It catalyses the reaction 6-carboxyhexanoyl-[ACP] + L-alanine + H(+) = (8S)-8-amino-7-oxononanoate + holo-[ACP] + CO2. Its pathway is cofactor biosynthesis; biotin biosynthesis. In terms of biological role, catalyzes the decarboxylative condensation of pimeloyl-[acyl-carrier protein] and L-alanine to produce 8-amino-7-oxononanoate (AON), [acyl-carrier protein], and carbon dioxide. The protein is 8-amino-7-oxononanoate synthase of Mycobacterium bovis (strain ATCC BAA-935 / AF2122/97).